Consider the following 196-residue polypeptide: Type-4 uracil-DNA glycosylase (196 aa).

Residues Cys13 and Cys16 each contribute to the [4Fe-4S] cluster site. Uracil-binding positions include 40–42 (GEA), Phe54, and Asn80. [4Fe-4S] cluster is bound by residues Cys84 and Cys100. His162 lines the uracil pocket.

It belongs to the uracil-DNA glycosylase (UDG) superfamily. Type 4 (UDGa) family.

It carries out the reaction Hydrolyzes single-stranded DNA or mismatched double-stranded DNA and polynucleotides, releasing free uracil.. Removes uracil bases that are present in DNA as a result of either deamination of cytosine or misincorporation of dUMP instead of dTMP. Can remove uracil from double-stranded DNA containing either a U/G or U/A base pair as well as from single-stranded DNA. The polypeptide is Type-4 uracil-DNA glycosylase (Pyrobaculum aerophilum (strain ATCC 51768 / DSM 7523 / JCM 9630 / CIP 104966 / NBRC 100827 / IM2)).